The primary structure comprises 294 residues: MTETTDSPSERQPGPAEPELSSRDPDIAGQVFDAAPFDAAPDADSEGDSKAAKTDEPRPAKRSTLREFAVLAVIAVVLYYVMLTFVARPYLIPSESMEPTLHGCSTCVGDRIMVDKLSYRFGSPQPGDVIVFRGPPSWNVGYKSIRSHNVAVRWVQNALSFIGFVPPDENDLVKRVIAVGGQTVQCRSDTGLTVNGRPLKEPYLDPATMMADPSIYPCLGSEFGPVTVPPGRVWVMGDNRTHSADSRAHCPLLCTDDPLPGTVPVANVIGKARLIVWPPSRWGVVRSVNPQQGR.

The interval 1 to 59 is disordered; that stretch reads MTETTDSPSERQPGPAEPELSSRDPDIAGQVFDAAPFDAAPDADSEGDSKAAKTDEPRP. Topologically, residues 1–66 are cytoplasmic; sequence MTETTDSPSE…PRPAKRSTLR (66 aa). The span at 47–59 shows a compositional bias: basic and acidic residues; that stretch reads GDSKAAKTDEPRP. A helical membrane pass occupies residues 67–87; it reads EFAVLAVIAVVLYYVMLTFVA. At 88–294 the chain is on the extracellular side; that stretch reads RPYLIPSESM…VRSVNPQQGR (207 aa). Active-site residues include serine 96 and lysine 174.

This sequence belongs to the peptidase S26 family.

The protein resides in the cell membrane. It catalyses the reaction Cleavage of hydrophobic, N-terminal signal or leader sequences from secreted and periplasmic proteins.. In Mycobacterium tuberculosis (strain CDC 1551 / Oshkosh), this protein is Signal peptidase I (lepB).